We begin with the raw amino-acid sequence, 424 residues long: PtdIns3K complex I subunit atg38 (424 aa).

A coiled-coil region spans residues 50-78; it reads LIKRCANNQIEELMVRIRELRESLPNKQT. A required for interaction with atg8 region spans residues 73 to 212; it reads LPNKQTPISM…DPAYQNTNEQ (140 aa). The AIM motif lies at 178–181; that stretch reads FLIV. Over residues 268-284 the composition is skewed to basic and acidic residues; that stretch reads LSEEEMGRSHKREESFK. Residues 268–299 form a disordered region; the sequence is LSEEEMGRSHKREESFKRAFGHASSSESSIGE. The stretch at 390–420 forms a coiled coil; sequence TVDSQLKIKQLETQIATLQKQLEQFQTSTLD.

Belongs to the ATG38 family. Component of the autophagy-specific vps34 PI3-kinase complex I composed of vps15, atg6, pik3/vps34, atg14 and atg38. Interacts (via AIM motif) with atg8; the interaction is direct and leads to recruitment of the autophagy-specific vps34 PI3-kinase complex I to the phagophore assembly site.

It is found in the preautophagosomal structure membrane. Its subcellular location is the cytoplasm. It localises to the cytosol. Functionally, functions as a part of the autophagy-specific VPS34 PI3-kinase complex I that plays a role in autophagosome assembly. This complex is essential to recruit the atg8-phosphatidylinositol conjugate and the atg12-atg5 conjugate to the pre-autophagosomal structure. By binding to atg8 at the phagophore assembly site, atg38 helps establish a positive feedback loop for recruitment of phagophore assembly proteins, including atg8. The chain is PtdIns3K complex I subunit atg38 from Schizosaccharomyces pombe (strain 972 / ATCC 24843) (Fission yeast).